The following is a 135-amino-acid chain: Surface presentation of antigens protein SpaK (135 aa).

Belongs to the SpaK family.

Involved in a secretory pathway responsible for the surface presentation of determinants needed for the entry of Salmonella species into mammalian cells. The polypeptide is Surface presentation of antigens protein SpaK (spaK) (Salmonella typhi).